Consider the following 676-residue polypeptide: Beta-galactosidase BgaP (676 aa).

Residue arginine 112 participates in substrate binding. Cysteine 116 serves as a coordination point for Zn(2+). Asparagine 150 lines the substrate pocket. The Proton donor role is filled by glutamate 151. Zn(2+)-binding residues include cysteine 156, cysteine 158, and cysteine 161. Catalysis depends on glutamate 308, which acts as the Nucleophile. Substrate-binding positions include tryptophan 316 and 356–359 (EKYH).

This sequence belongs to the glycosyl hydrolase 42 family. Homodimer.

It carries out the reaction Hydrolysis of terminal non-reducing beta-D-galactose residues in beta-D-galactosides.. Its activity is regulated as follows. No activity lost during treatment with 100 mM EDTA after 2 hours, and the addition of 1 mM MgCl(2), 1 mM CaCl(2) or 1 mM MnCl(2) has no effect. However, the enzyme activity is inhibited by Zn(2+), Cu(2+), Ni(2+) and Co(2+) to different extents. Addition of Na(+) or K(+) slightly stimulates the enzyme activity at low concentrations and the optimal concentration is 250 mM. A further increase of their concentration of ions above the optimum value results in a decrease in enzyme activity. The enzyme is still active even in the presence of Na(+) or K(+) at a concentration up to 5 M. In terms of biological role, hydrolyzes lactose, o-nitrophenyl-beta-D-galactopyranoside (ONPG), p-nitrophenyl-beta-D-galactopyranoside (PNPG), 5-bromo-4-chloro-3-indolyl-beta-D-galactopyranoside (X-gal), o-nitrophenyl-beta-D-fucopyranoside, p-nitrophenyl-beta-D-mannoside, o-nitrophenyl-beta-D-glucoside, p-nitrophenyl-beta-D-xyloside, p-nitrophenyl-beta-D-cellobioside, p-nitrophenyl-beta-D-arabinoside, p-nitrophenyl-beta-D-lactoside, p-nitrophenyl-beta-D-galacturonide, p-nitrophenyl-beta-D-glucuronide and p-nitrophenyl-alpha-D-galactoside with highest level of activity with ONPG as substrate, intermediate level of activity with PNPG and lower levels of activity with all other chromogenic nitrophenyl analogs. Able to hydrolyze 34% of milk lactose after 60 minutes at 5 degrees Celsius. In Planococcus sp. (strain L4), this protein is Beta-galactosidase BgaP.